The following is a 782-amino-acid chain: Formin-like protein 9 (782 aa).

The first 24 residues, 1 to 24 (MQNFWFAIFFFLLTCAPPSPLSYA), serve as a signal peptide directing secretion. A helical membrane pass occupies residues 102 to 122 (LLLPALSAVLVIATVIGLALF). Disordered stretches follow at residues 191–223 (DSPEIRPLPPLPPRSFHHNNYETEVNEEDEEEE), 264–287 (MSPPNPRYSDATNLQSPSPERLRV), and 387–407 (SSSQQSKVPALPPPTRPPPLV). The segment covering 214 to 223 (EVNEEDEEEE) has biased composition (acidic residues). Residues 396 to 407 (ALPPPTRPPPLV) are compositionally biased toward pro residues. An FH2 domain is found at 406-782 (LVPPSQPFVV…LDQVCKEMGD (377 aa)).

Belongs to the formin-like family. Class-I subfamily.

It is found in the membrane. Its function is as follows. Might be involved in the organization and polarity of the actin cytoskeleton. The sequence is that of Formin-like protein 9 (FH9) from Arabidopsis thaliana (Mouse-ear cress).